The sequence spans 417 residues: Serpin A9 (417 aa).

An N-terminal signal peptide occupies residues 1 to 23 (MASYLYGVLFAVGLCAPIYCVSP). N-linked (GlcNAc...) asparagine glycans are attached at residues asparagine 101 and asparagine 390.

Belongs to the serpin family. As to expression, highly expressed in normal germinal center (GC) B-cells and GC B-cell-derived malignancies.

The protein resides in the secreted. Its subcellular location is the cytoplasm. It is found in the membrane. In terms of biological role, protease inhibitor that inhibits trypsin and trypsin-like serine proteases (in vitro). Inhibits plasmin and thrombin with lower efficiency (in vitro). The polypeptide is Serpin A9 (SERPINA9) (Homo sapiens (Human)).